An 84-amino-acid chain; its full sequence is Small ribosomal subunit protein uS17 (84 aa).

The protein belongs to the universal ribosomal protein uS17 family. In terms of assembly, part of the 30S ribosomal subunit.

In terms of biological role, one of the primary rRNA binding proteins, it binds specifically to the 5'-end of 16S ribosomal RNA. This Sodalis glossinidius (strain morsitans) protein is Small ribosomal subunit protein uS17.